A 473-amino-acid chain; its full sequence is MFQRSGAAHHIKLISSRRCRFKSSFAVALNAASKLVTPKILWNNPISLVSKEMNTLAKNIVALIGSGHPVLNKVTSYYFETEGKKVRPLLVLLLSRALSEIPMTERNHLKIDKSDVPEDPIYSKPSQNQLFQRPASSISPLHILHGIKPLNPLTKGPEPLPEETFDKQRGILPKQRRLAEIVEMIHTASLLHDDVIDHSDTRRGRPSGNAAFTNKMAVLAGDFLLGRATVSISRLHNPEVVELMSNSIANLVEGEFMQLKNTSIDADIDTIENGHKLLPVPSKKLEVKEHDFRVPSRQQGLQLSHDQIIETAFEYYIHKTYLKTAALISKSCRCAAILSGASPAVIDECYDFGRNLGICFQLVDDMLDFTVSGKDLGKPSGADLKLGIATAPVLFAWKEDPSLGPLISRNFSERGDVEKTIDSVRLHNGIAKTKILAEEYRDKALQNLRDSLPESDARSALEFLTNSILTRRK.

3 residues coordinate isopentenyl diphosphate: Lys84, Arg87, and His186. Residues Asp193 and Asp197 each contribute to the Mg(2+) site. Arg202 lines the an all-trans-polyprenyl diphosphate pocket. Isopentenyl diphosphate is bound at residue Arg203. An all-trans-polyprenyl diphosphate is bound by residues Lys323, Thr324, Gln361, and Lys378.

It belongs to the FPP/GGPP synthase family. Mg(2+) is required as a cofactor.

It localises to the mitochondrion inner membrane. The protein operates within cofactor biosynthesis; ubiquinone biosynthesis. Assembly of polyisoprenoid side chains. The polyprenyl synthase of coenzyme Q biosynthesis catalyzes the formation from isopentenyl diphosphate of all trans-polyprenyl pyrophosphates generally ranging in length of between 6 and 10 isoprene units depending on the species. The polypeptide is Hexaprenyl pyrophosphate synthase, mitochondrial (COQ1) (Saccharomyces cerevisiae (strain ATCC 204508 / S288c) (Baker's yeast)).